Here is a 441-residue protein sequence, read N- to C-terminus: Keratin, type I cytoskeletal 15 (441 aa).

A head region spans residues 2-91 (LLLGHASTST…GGSDLLLGTS (90 aa)). The segment at 92–127 (GKEAMQNLNDRLASYLDKVRSLEGKNHELELKIKDW) is coil 1A. Residues 92 to 407 (GKEAMQNLND…MLLDSEDSKG (316 aa)) enclose the IF rod domain. The tract at residues 128-149 (YSQVIPGTGGPDARDYGHLEKE) is linker 1. A coil 1B region spans residues 150-241 (IEDLQNKVNN…KNHEEDMKAA (92 aa)). The segment at 242 to 261 (SSGIAGQVNVELDAAPGTNL) is linker 12. Residues 262-403 (LDELDACRRD…ATYRMLLDSE (142 aa)) form a coil 2 region. Residues 404-441 (DSKGSIINHKILTAIEKLVDGIVLSTEVLEKQIPVLSY) form a tail region.

It belongs to the intermediate filament family. Heterotetramer of two type I and two type II keratins. In terms of tissue distribution, expressed in skin.

This chain is Keratin, type I cytoskeletal 15 (KRT15), found in Protopterus aethiopicus (Marbled lungfish).